Reading from the N-terminus, the 51-residue chain is Large ribosomal subunit protein eL39z (51 aa).

It belongs to the eukaryotic ribosomal protein eL39 family.

This Oryza sativa subsp. japonica (Rice) protein is Large ribosomal subunit protein eL39z (RPL39A).